The following is a 113-amino-acid chain: Hydrogenase maturation factor HypA (113 aa).

Residue His2 coordinates Ni(2+). Zn(2+) is bound by residues Cys70, Cys73, Cys86, and Cys88.

Belongs to the HypA/HybF family.

Functionally, involved in the maturation of [NiFe] hydrogenases. Required for nickel insertion into the metal center of the hydrogenase. This chain is Hydrogenase maturation factor HypA, found in Nostoc punctiforme (strain ATCC 29133 / PCC 73102).